A 531-amino-acid chain; its full sequence is Importin subunit alpha-2 (531 aa).

Residues 1–10 are compositionally biased toward polar residues; sequence MTLTETSLSH. Positions 1-88 are disordered; it reads MTLTETSLSH…ISHQQSSTRL (88 aa). The region spanning 5 to 67 is the IBB domain; it reads ETSLSHNAEE…RNIVDVDEGG (63 aa). Composition is skewed to basic and acidic residues over residues 11–20 and 29–50; these read NAEEGKDEGG and TKHE…KQKG. Over residues 62-75 the composition is skewed to acidic residues; sequence DVDEGGNSESELEE. ARM repeat units follow at residues 122–161, 164–203, 250–290, 293–331, 334–374, 377–416, and 420–459; these read NPPI…NIVS, TEQT…NIAG, KNPH…YLTD, DEQI…NVAT, DSLT…NIIA, QKQI…NLAQ, and NRQV…TLML. Residues 511–531 form a disordered region; the sequence is DDAGEKESHENADPQDNKWSF. Positions 515-531 are enriched in basic and acidic residues; the sequence is EKESHENADPQDNKWSF.

Belongs to the importin alpha family. As to quaternary structure, forms a complex with an importin beta subunit. Interacts with akir-1. In terms of tissue distribution, germline tissues. Expressed exclusively in germ line cells from the early embryonic through adult stages.

It localises to the cytoplasm. It is found in the nucleus. The protein localises to the nucleus envelope. Nuclear transport receptor that mediates nuclear import of proteins, and which is involved in sister chromatid cohesion. Binds specifically and directly to substrates containing either a simple or bipartite nuclear localization signals (NLS) motif. Promotes docking of import substrates to the nuclear envelope. Together with akir-1 adapter, required for the import and load of cohesin complex proteins in meiotic nuclei. In Caenorhabditis elegans, this protein is Importin subunit alpha-2.